The following is a 114-amino-acid chain: Large ribosomal subunit protein bL19 (114 aa).

The protein belongs to the bacterial ribosomal protein bL19 family.

This protein is located at the 30S-50S ribosomal subunit interface and may play a role in the structure and function of the aminoacyl-tRNA binding site. The chain is Large ribosomal subunit protein bL19 from Clostridium botulinum (strain ATCC 19397 / Type A).